Consider the following 417-residue polypeptide: NADH-quinone oxidoreductase subunit D (417 aa).

The protein belongs to the complex I 49 kDa subunit family. NDH-1 is composed of 14 different subunits. Subunits NuoB, C, D, E, F, and G constitute the peripheral sector of the complex.

The protein localises to the cell inner membrane. The enzyme catalyses a quinone + NADH + 5 H(+)(in) = a quinol + NAD(+) + 4 H(+)(out). Functionally, NDH-1 shuttles electrons from NADH, via FMN and iron-sulfur (Fe-S) centers, to quinones in the respiratory chain. The immediate electron acceptor for the enzyme in this species is believed to be ubiquinone. Couples the redox reaction to proton translocation (for every two electrons transferred, four hydrogen ions are translocated across the cytoplasmic membrane), and thus conserves the redox energy in a proton gradient. The protein is NADH-quinone oxidoreductase subunit D of Albidiferax ferrireducens (strain ATCC BAA-621 / DSM 15236 / T118) (Rhodoferax ferrireducens).